The chain runs to 248 residues: 3-deoxy-manno-octulosonate cytidylyltransferase (248 aa).

It belongs to the KdsB family.

Its subcellular location is the cytoplasm. It catalyses the reaction 3-deoxy-alpha-D-manno-oct-2-ulosonate + CTP = CMP-3-deoxy-beta-D-manno-octulosonate + diphosphate. It functions in the pathway nucleotide-sugar biosynthesis; CMP-3-deoxy-D-manno-octulosonate biosynthesis; CMP-3-deoxy-D-manno-octulosonate from 3-deoxy-D-manno-octulosonate and CTP: step 1/1. The protein operates within bacterial outer membrane biogenesis; lipopolysaccharide biosynthesis. In terms of biological role, activates KDO (a required 8-carbon sugar) for incorporation into bacterial lipopolysaccharide in Gram-negative bacteria. The sequence is that of 3-deoxy-manno-octulosonate cytidylyltransferase from Enterobacter sp. (strain 638).